We begin with the raw amino-acid sequence, 308 residues long: Ribosomal RNA large subunit methyltransferase F (308 aa).

This sequence belongs to the methyltransferase superfamily. METTL16/RlmF family.

Its subcellular location is the cytoplasm. It catalyses the reaction adenosine(1618) in 23S rRNA + S-adenosyl-L-methionine = N(6)-methyladenosine(1618) in 23S rRNA + S-adenosyl-L-homocysteine + H(+). In terms of biological role, specifically methylates the adenine in position 1618 of 23S rRNA. This Shigella boydii serotype 18 (strain CDC 3083-94 / BS512) protein is Ribosomal RNA large subunit methyltransferase F.